The following is a 189-amino-acid chain: GTPase HRas (189 aa).

N-acetylmethionine is present on M1. The residue at position 2 (T2) is an N-acetylthreonine; in GTPase HRas, N-terminally processed. 10 to 17 (GAGGVGKS) provides a ligand contact to GTP. The short motif at 32–40 (YDPTIEDSY) is the Effector region element. GTP contacts are provided by residues 57 to 61 (DTAGQ) and 116 to 119 (NKCD). C118 is modified (S-nitrosocysteine). The hypervariable region stretch occupies residues 166-185 (HKLRKLNPPDESGPGCMNCK). S-palmitoyl cysteine attachment occurs at residues C181 and C184. C186 is modified (cysteine methyl ester). Residue C186 is the site of S-farnesyl cysteine attachment. Residues 187–189 (VIS) constitute a propeptide, removed in mature form.

It belongs to the small GTPase superfamily. Ras family. Palmitoylated by the ZDHHC9-GOLGA7 complex. A continuous cycle of de- and re-palmitoylation regulates rapid exchange between plasma membrane and Golgi.

It is found in the cell membrane. The protein localises to the golgi apparatus membrane. The enzyme catalyses GTP + H2O = GDP + phosphate + H(+). With respect to regulation, alternates between an inactive form bound to GDP and an active form bound to GTP. Activated by a guanine nucleotide-exchange factor (GEF) and inactivated by a GTPase-activating protein (GAP). Its function is as follows. Ras proteins bind GDP/GTP and possess intrinsic GTPase activity. This Gallus gallus (Chicken) protein is GTPase HRas (HRAS).